A 403-amino-acid chain; its full sequence is Phosphopentomutase 2 (403 aa).

Residues Asp13, Asp298, His303, Asp339, His340, and His351 each contribute to the Mn(2+) site.

It belongs to the phosphopentomutase family. Requires Mn(2+) as cofactor.

The protein localises to the cytoplasm. The enzyme catalyses 2-deoxy-alpha-D-ribose 1-phosphate = 2-deoxy-D-ribose 5-phosphate. It carries out the reaction alpha-D-ribose 1-phosphate = D-ribose 5-phosphate. It participates in carbohydrate degradation; 2-deoxy-D-ribose 1-phosphate degradation; D-glyceraldehyde 3-phosphate and acetaldehyde from 2-deoxy-alpha-D-ribose 1-phosphate: step 1/2. Isomerase that catalyzes the conversion of deoxy-ribose 1-phosphate (dRib-1-P) and ribose 1-phosphate (Rib-1-P) to deoxy-ribose 5-phosphate (dRib-5-P) and ribose 5-phosphate (Rib-5-P), respectively. The chain is Phosphopentomutase 2 from Streptococcus agalactiae serotype Ia (strain ATCC 27591 / A909 / CDC SS700).